The primary structure comprises 139 residues: Nuclear transcription factor Y subunit B-4 (139 aa).

A DNA-binding region spans residues 8–14 (LPIANVG). The subunit association domain (SAD) stretch occupies residues 35-46 (VQECATEFISFV). The segment covering 90–115 (YREAERERTEHNKGSNDSGNEKETNT) has biased composition (basic and acidic residues). The interval 90–139 (YREAERERTEHNKGSNDSGNEKETNTRSDVQNQSTKFIRVVEKGSSSSAR) is disordered. The segment covering 116–125 (RSDVQNQSTK) has biased composition (polar residues).

The protein belongs to the NFYB/HAP3 subunit family. As to quaternary structure, heterotrimeric transcription factor composed of three components, NF-YA, NF-YB and NF-YC. NF-YB and NF-YC must interact and dimerize for NF-YA association and DNA binding. Expressed in flowers, siliques and young rosettes.

The protein resides in the nucleus. Component of the NF-Y/HAP transcription factor complex. The NF-Y complex stimulates the transcription of various genes by recognizing and binding to a CCAAT motif in promoters. The sequence is that of Nuclear transcription factor Y subunit B-4 (NFYB4) from Arabidopsis thaliana (Mouse-ear cress).